A 70-amino-acid polypeptide reads, in one-letter code: MTKPTKDDELYREMCRVVGKVVLEMRDLGQEPKYIVIAGVLRTALANQRIQRSALEKQAMETVINALARS.

This sequence belongs to the FumD family.

It catalyses the reaction (S)-malate = fumarate + H2O. Functionally, in vitro catalyzes the addition of water to fumarate, forming malate. Cannot catalyze the reverse reaction. Cannot use the cis-isomer maleate as substrate. This is Fumarase D from Salmonella typhi.